We begin with the raw amino-acid sequence, 67 residues long: DNA-directed RNA polymerase subunit omega (67 aa).

The protein belongs to the RNA polymerase subunit omega family. In terms of assembly, the RNAP catalytic core consists of 2 alpha, 1 beta, 1 beta' and 1 omega subunit. When a sigma factor is associated with the core the holoenzyme is formed, which can initiate transcription.

The catalysed reaction is RNA(n) + a ribonucleoside 5'-triphosphate = RNA(n+1) + diphosphate. Promotes RNA polymerase assembly. Latches the N- and C-terminal regions of the beta' subunit thereby facilitating its interaction with the beta and alpha subunits. The chain is DNA-directed RNA polymerase subunit omega from Cupriavidus metallidurans (strain ATCC 43123 / DSM 2839 / NBRC 102507 / CH34) (Ralstonia metallidurans).